A 106-amino-acid chain; its full sequence is Malonate decarboxylase acyl carrier protein (106 aa).

O-(phosphoribosyl dephospho-coenzyme A)serine is present on serine 28.

This sequence belongs to the MdcC family. In terms of processing, covalently binds the prosthetic group of malonate decarboxylase.

The protein resides in the cytoplasm. Subunit of malonate decarboxylase, it is an acyl carrier protein to which acetyl and malonyl thioester residues are bound via a 2'-(5''-phosphoribosyl)-3'-dephospho-CoA prosthetic group and turn over during the catalytic mechanism. This Stenotrophomonas maltophilia (strain K279a) protein is Malonate decarboxylase acyl carrier protein.